The sequence spans 223 residues: DNA mismatch repair protein MutH (223 aa).

The protein belongs to the MutH family.

It is found in the cytoplasm. Sequence-specific endonuclease that cleaves unmethylated GATC sequences. It is involved in DNA mismatch repair. The chain is DNA mismatch repair protein MutH from Haemophilus influenzae (strain PittGG).